We begin with the raw amino-acid sequence, 95 residues long: Aspartyl/glutamyl-tRNA(Asn/Gln) amidotransferase subunit C (95 aa).

It belongs to the GatC family. As to quaternary structure, heterotrimer of A, B and C subunits.

It catalyses the reaction L-glutamyl-tRNA(Gln) + L-glutamine + ATP + H2O = L-glutaminyl-tRNA(Gln) + L-glutamate + ADP + phosphate + H(+). The catalysed reaction is L-aspartyl-tRNA(Asn) + L-glutamine + ATP + H2O = L-asparaginyl-tRNA(Asn) + L-glutamate + ADP + phosphate + 2 H(+). Functionally, allows the formation of correctly charged Asn-tRNA(Asn) or Gln-tRNA(Gln) through the transamidation of misacylated Asp-tRNA(Asn) or Glu-tRNA(Gln) in organisms which lack either or both of asparaginyl-tRNA or glutaminyl-tRNA synthetases. The reaction takes place in the presence of glutamine and ATP through an activated phospho-Asp-tRNA(Asn) or phospho-Glu-tRNA(Gln). In Bradyrhizobium sp. (strain BTAi1 / ATCC BAA-1182), this protein is Aspartyl/glutamyl-tRNA(Asn/Gln) amidotransferase subunit C.